The chain runs to 550 residues: Warthog protein 8 (550 aa).

Positions 1-19 (MNYLLLVSGLLSVWQPVFG) are cleaved as a signal peptide.

It belongs to the hedgehog family. Post-translationally, the C-terminal domain displays an autoproteolysis activity.

It localises to the secreted. It is found in the cell surface. The protein resides in the cell membrane. The protein localises to the extracellular space. In terms of biological role, intercellular signal essential for a variety of patterning events during development. This chain is Warthog protein 8 (wrt-8), found in Caenorhabditis elegans.